The sequence spans 218 residues: MPGRQRRDGGSGPAGQNGPNTGDNRGGGDRRGGGRDDRRGGQSAEKSNHIERVVTINRVSKVVKGGRRFSFTALVIVGDGNGLVGVGYGKAKEVPAAIQKGVEEARKSFFRVPMIGSTITHPVQGEAAAGVVMLRPASPGTGVIAGGAVRAVLECAGIHDILSKSLGSDNAINVVHATVAALKGLQRPEEVAARRGLALEDVAPAGMLRARAQAGSVK.

The tract at residues 1 to 49 is disordered; it reads MPGRQRRDGGSGPAGQNGPNTGDNRGGGDRRGGGRDDRRGGQSAEKSNH. Residues 26–49 are compositionally biased toward basic and acidic residues; that stretch reads GGGDRRGGGRDDRRGGQSAEKSNH. In terms of domain architecture, S5 DRBM spans 49-112; that stretch reads HIERVVTINR…EEARKSFFRV (64 aa).

This sequence belongs to the universal ribosomal protein uS5 family. As to quaternary structure, part of the 30S ribosomal subunit. Contacts proteins S4 and S8.

In terms of biological role, with S4 and S12 plays an important role in translational accuracy. Functionally, located at the back of the 30S subunit body where it stabilizes the conformation of the head with respect to the body. The protein is Small ribosomal subunit protein uS5 of Rhodococcus jostii (strain RHA1).